Consider the following 238-residue polypeptide: IkB-like protein (238 aa).

ANK repeat units lie at residues 48–77 (GSSVFMWICIYGRIDFLKFLFEQESYPGEI), 86–115 (DGNSALHYLAEKKNHLILEEVLGYFGKNGT), 123–152 (NGMTPVMKAAIRGRTSNVLSLIKFGADPTQ), and 157–187 (RGFTAWDWAVFTGNMELVKSLNHDYQKPLYM). The Nuclear localization signal signature appears at 80–86 (PHRRDKD). The Nuclear localization signal signature appears at 202 to 213 (KKKPKIIITGCK). The PxIxITxC motif; Interaction with host PPP3CA signature appears at 205–212 (PKIIITGC). The short motif at 227 to 230 (FLCV) is the FLCV motif element.

It belongs to the asfivirus A238L family. Interacts with host PPIA. Interacts with host PPP3CA/Calcineurin. Interacts with host RELA/p65; interaction of the 32 kDa form with host RELA results in the formation of a stable complex with NF-kappa-B. Interacts with host PPP3R1. Interacts with host EP300; this interaction inhibits the association of host EP300 with host RELA, JUN and NFATC2. Post-translationally, the protein exists in a 28 kDa and a 32 kDa form, probably due to post-translational modifications which are neither phosphorylation, nor sumoylation.

It is found in the host nucleus. The protein resides in the host cytoplasm. Functionally, I-kappa-B- (IkB)-like protein that inhibits the binding of NF-kappa-B to DNA, thereby down-regulating pro-inflammatory cytokine production. Forms a heterodimer with the NF-kappa-B subunit RELA/p65 and prevents the activation of the NF-kappa-B transcription factor. Also inhibits the host calcineurin phosphatase activity, which is required for the induction of nuclear factor of activated T cells(NFAT)-dependent immune response genes. Inhibits calcineurin function, which is required for the induction of nuclear factor of activated T cells (NFAT)-dependent immune response genes. Prevents the binding of substrates to calcineurin without affecting the phosphatase activity. Does not contain the serine residues that are phosphorylated by host IkB kinase and thus is not degraded following stimulation of the NFkB pathway. This chain is IkB-like protein (A238L), found in African swine fever virus (strain Badajoz 1971 Vero-adapted) (Ba71V).